The chain runs to 518 residues: Hyccin (518 aa).

Disordered stretches follow at residues 385–410 (GLRR…MDQL) and 466–492 (VFSG…EGVA). A compositionally biased stretch (basic and acidic residues) spans 393–403 (SSKEKDKEKDA). The segment covering 466-484 (VFSGNQPSSRASSPTSNHV) has biased composition (polar residues).

The protein belongs to the Hyccin family. In terms of assembly, component of a phosphatidylinositol 4-kinase (PI4K) complex.

The protein resides in the cytoplasm. It is found in the cytosol. It localises to the cell membrane. In terms of biological role, component of a complex required to localize phosphatidylinositol 4-kinase (PI4K) to the plasma membrane. The complex acts as a regulator of phosphatidylinositol 4-phosphate (PtdIns(4)P) synthesis. The protein is Hyccin (hycc1) of Danio rerio (Zebrafish).